Consider the following 156-residue polypeptide: ATP synthase subunit b (156 aa).

A helical transmembrane segment spans residues 12-32; that stretch reads VAFLIFVLFCMKFIWPPVIAA.

Belongs to the ATPase B chain family. In terms of assembly, F-type ATPases have 2 components, F(1) - the catalytic core - and F(0) - the membrane proton channel. F(1) has five subunits: alpha(3), beta(3), gamma(1), delta(1), epsilon(1). F(0) has three main subunits: a(1), b(2) and c(10-14). The alpha and beta chains form an alternating ring which encloses part of the gamma chain. F(1) is attached to F(0) by a central stalk formed by the gamma and epsilon chains, while a peripheral stalk is formed by the delta and b chains.

Its subcellular location is the cell inner membrane. Its function is as follows. F(1)F(0) ATP synthase produces ATP from ADP in the presence of a proton or sodium gradient. F-type ATPases consist of two structural domains, F(1) containing the extramembraneous catalytic core and F(0) containing the membrane proton channel, linked together by a central stalk and a peripheral stalk. During catalysis, ATP synthesis in the catalytic domain of F(1) is coupled via a rotary mechanism of the central stalk subunits to proton translocation. Component of the F(0) channel, it forms part of the peripheral stalk, linking F(1) to F(0). In Pseudomonas fluorescens (strain ATCC BAA-477 / NRRL B-23932 / Pf-5), this protein is ATP synthase subunit b.